An 87-amino-acid chain; its full sequence is MPRICPILDKRPTRGRKIIRKGKAKKKGGIGLHTTGNTPRLFLPNLRNKKVYVPELAKKVSLRISARALKTLMKKGTYTILKEKGLI.

This sequence belongs to the bacterial ribosomal protein bL28 family.

The polypeptide is Large ribosomal subunit protein bL28 (Methylacidiphilum infernorum (isolate V4) (Methylokorus infernorum (strain V4))).